The following is a 367-amino-acid chain: UDP-N-acetylglucosamine--N-acetylmuramyl-(pentapeptide) pyrophosphoryl-undecaprenol N-acetylglucosamine transferase (367 aa).

UDP-N-acetyl-alpha-D-glucosamine-binding positions include 15-17 (TGG), N127, R163, S191, I249, and Q294.

Belongs to the glycosyltransferase 28 family. MurG subfamily.

It localises to the cell inner membrane. It carries out the reaction di-trans,octa-cis-undecaprenyl diphospho-N-acetyl-alpha-D-muramoyl-L-alanyl-D-glutamyl-meso-2,6-diaminopimeloyl-D-alanyl-D-alanine + UDP-N-acetyl-alpha-D-glucosamine = di-trans,octa-cis-undecaprenyl diphospho-[N-acetyl-alpha-D-glucosaminyl-(1-&gt;4)]-N-acetyl-alpha-D-muramoyl-L-alanyl-D-glutamyl-meso-2,6-diaminopimeloyl-D-alanyl-D-alanine + UDP + H(+). It functions in the pathway cell wall biogenesis; peptidoglycan biosynthesis. Its function is as follows. Cell wall formation. Catalyzes the transfer of a GlcNAc subunit on undecaprenyl-pyrophosphoryl-MurNAc-pentapeptide (lipid intermediate I) to form undecaprenyl-pyrophosphoryl-MurNAc-(pentapeptide)GlcNAc (lipid intermediate II). This chain is UDP-N-acetylglucosamine--N-acetylmuramyl-(pentapeptide) pyrophosphoryl-undecaprenol N-acetylglucosamine transferase, found in Burkholderia thailandensis (strain ATCC 700388 / DSM 13276 / CCUG 48851 / CIP 106301 / E264).